The chain runs to 630 residues: Telomere repeat-binding protein 5 (630 aa).

Disordered regions lie at residues 1-38, 56-78, and 308-327; these read MVLQ…SENH, EGGN…CAVK, and YTAS…GSPR. The segment covering 57 to 71 has biased composition (low complexity); that stretch reads GGNSSSSSNNTSGNN. A compositionally biased stretch (polar residues) spans 309–325; that stretch reads TASQSEETNKNEGQSGS. One can recognise a Ubiquitin-like domain in the interval 354-433; it reads VKLGIKSFRV…SDTLGFCLEP (80 aa). The disordered stretch occupies residues 463–489; the sequence is LPSPGKHAKPSNSVESDLDSKPSAPNR. The region spanning 523–582 is the HTH myb-type domain; the sequence is AQRRIRRPFSVAEVEALVQAVERLGTGRWRDVKLRAFDNAKHRTYVDLKDKWKTLVHTAR. The H-T-H motif DNA-binding region spans 551-578; that stretch reads WRDVKLRAFDNAKHRTYVDLKDKWKTLV.

Homodimer. In terms of tissue distribution, expressed ubiquitously.

It is found in the nucleus. In terms of biological role, binds specifically to the plant telomeric double-stranded DNA sequences. At least 6 repeats of telomeric sequences are required for binding. The sequence is that of Telomere repeat-binding protein 5 (TRP5) from Arabidopsis thaliana (Mouse-ear cress).